The sequence spans 397 residues: Phosphoglycerate kinase (397 aa).

Residues 21–23, arginine 37, 60–63, arginine 119, and arginine 152 each bind substrate; these read DFN and HLGR. Residues lysine 203, glycine 294, glutamate 325, and 354–357 contribute to the ATP site; that span reads GGDS.

The protein belongs to the phosphoglycerate kinase family. In terms of assembly, monomer.

Its subcellular location is the cytoplasm. It catalyses the reaction (2R)-3-phosphoglycerate + ATP = (2R)-3-phospho-glyceroyl phosphate + ADP. It participates in carbohydrate degradation; glycolysis; pyruvate from D-glyceraldehyde 3-phosphate: step 2/5. This is Phosphoglycerate kinase from Chlorobium luteolum (strain DSM 273 / BCRC 81028 / 2530) (Pelodictyon luteolum).